The following is a 246-amino-acid chain: uncharacterized protein (246 aa).

The protein belongs to the IIV-6 170L family.

This is an uncharacterized protein from Acheta domesticus (House cricket).